Reading from the N-terminus, the 1830-residue chain is MAPWRKADKERHGVAIYNFQGSGAPQLSLQIGDVVRIQETCGDWYRGYLIKHKMLQGIFPKSFIHIKEVTVEKRRNTENIIPAEIPLAQEVTTTLWEWGSIWKQLYVASKKERFLQVQSMMYDLMEWRSQLLSGTLPKDELKELKQKVTSKIDYGNKILELDLIVRDEDGNILDPDNTSVISLFHAHEEATDKITERIKEEMSKDQPDYAMYSRISSSPTHSLYVFVRNFVCRIGEDAELFMSLYDPNKQTVISENYLVRWGSRGFPKEIEMLNNLKVVFTDLGNKDLNRDKIYLICQIVRVGKMDLKDTGAKKCTQGLRRPFGVAVMDITDIIKGKAESDEEKQHFIPFHPVTAENDFLHSLLGKVIASKGDSGGQGLWVTMKMLVGDIIQIRKDYPHLVDRTTVVARKLGFPEIIMPGDVRNDIYITLLQGDFDKYNKTTQRNVEVIMCVCAEDGKTLPNAICVGAGDKPMNEYRSVVYYQVKQPRWMETVKVAVPIEDMQRIHLRFMFRHRSSLESKDKGEKNFAMSYVKLMKEDGTTLHDGFHDLVVLKGDSKKMEDASAYLTLPSYRHHVENKGATLSRSSSSVGGLSVSSRDVFSISTLVCSTKLTQNVGLLGLLKWRMKPQLLQENLEKLKIVDGEEVVKFLQDTLDALFNIMMEHSQSDEYDILVFDALIYIIGLIADRKFQHFNTVLEAYIQQHFSATLAYKKLMTVLKTYLDTSSRGEQCEPILRTLKALEYVFKFIVRSRTLFSQLYEGKEQMEFEESMRRLFESINNLMKSQYKTTILLQVAALKYIPSVLHDVEMVFDAKLLSQLLYEFYTCIPPVKLQKQKVQSMNEIVQSNLFKKQECRDILLPVITKELKELLEQKDDMQHQVLERKYCVELLNSILEVLSYQDAAFTYHHIQEIMVQLLRTVNRTVITMGRDHILISHFVACMTAILNQMGDQHYSFYIETFQTSSELVDFLMETFIMFKDLIGKNVYPGDWMAMSMVQNRVFLRAINKFAETMNQKFLEHTNFEFQLWNNYFHLAVAFITQDSLQLEQFSHAKYNKILNKYGDMRRLIGFSIRDMWYKLGQNKICFIPGMVGPILEMTLIPEAELRKATIPIFFDMMLCEYQRSGDFKKFENEIILKLDHEVEGGRGDEQYMQLLESILMECAAEHPTIAKSVENFVNLVKGLLEKLLDYRGVMTDESKDNRMSCTVNLLNFYKDNNREEMYIRYLYKLRDLHLDCDNYTEAAYTLLLHTWLLKWSDEQCASQVMQTGQQHPQTHRQLKETLYETIIGYFDKGKMWEEAISLCKELAEQYEMEIFDYELLSQNLIQQAKFYESIMKILRPKPDYFAVGYYGQGFPSFLRNKVFIYRGKEYERREDFQMQLMTQFPNAEKMNTTSAPGDDVKNAPGQYIQCFTVQPVLDEHPRFKNKPVPDQIINFYKSNYVQRFHYSRPVRRGTVDPENEFASMWIERTSFVTAYKLPGILRWFEVVHMSQTTISPLENAIETMSTANEKILMMINQYQSDETLPINPLSMLLNGIVDPAVMGGFAKYEKAFFTEEYVRDHPEDQDKLTHLKDLIAWQIPFLGAGIKIHEKRVSDNLRPFHDRMEECFKNLKMKVEKEYGVREMPDFDDRRVGRPRSMLRSYRQMSIISLASMNSDCSTPSKPTSESFDLELASPKTPRVEQEEPISPGSTLPEVKLRRSKKRTKRSSVVFADEKAAAESDLKRLSRKHEFMSDTNLSEHAAIPLKASVLSQMSFASQSMPTIPALALSVAGIPGLDEANTSPRLSQTFLQLSDGDKKTLTRKKVNQFFKTMLASKSAEEGKQIPDSLSTDL.

One can recognise an SH3 domain in the interval Asp-8–Val-69. Residue Lys-304 is modified to N6-acetyllysine. The 185-residue stretch at Arg-423–Cys-607 folds into the C2 DOCK-type domain. A phosphoserine mark is found at Ser-588 and Ser-593. Lys-738 is subject to N6-acetyllysine. The tract at residues Cys-939–Pro-1476 is interaction with CRKL. In terms of domain architecture, DOCKER spans Tyr-1211–Met-1622. Residues Met-1651 to Ser-1665 show a composition bias toward polar residues. Residues Met-1651–Arg-1704 form a disordered region. Ser-1685, Ser-1706, Ser-1731, and Ser-1784 each carry phosphoserine.

This sequence belongs to the DOCK family. Homodimer. Interacts with RAC1 and RAC2. Interacts with CRKL and VAV. Interacts with CD3Z. In terms of tissue distribution, specifically expressed in hematopoietic cells. Highly expressed in peripheral blood leukocytes, and expressed at intermediate level in thymus and spleen. Expressed at very low level in the small intestine and colon.

It is found in the endomembrane system. It localises to the cytoplasm. The protein resides in the cytoskeleton. In terms of biological role, involved in cytoskeletal rearrangements required for lymphocyte migration in response of chemokines. Activates RAC1 and RAC2, but not CDC42, by functioning as a guanine nucleotide exchange factor (GEF), which exchanges bound GDP for free GTP. May also participate in IL2 transcriptional activation via the activation of RAC2. The polypeptide is Dedicator of cytokinesis protein 2 (DOCK2) (Homo sapiens (Human)).